Reading from the N-terminus, the 834-residue chain is Kinesin-like protein KIF18B (834 aa).

Residues V9–I353 enclose the Kinesin motor domain. An ATP-binding site is contributed by G111–T118. A coiled-coil region spans residues I368–S404. 4 disordered regions span residues Q400 to S508, L602 to M642, R655 to P686, and K800 to Y834. Over residues S411–L432 the composition is skewed to low complexity. T431 carries the phosphothreonine modification. The segment covering E462–T474 has biased composition (polar residues). Position 484 is a phosphoserine (S484). A compositionally biased stretch (basic and acidic residues) spans T611–T620. The Nuclear localization signal motif lies at P619 to L627. Residues S634 and S657 each carry the phosphoserine modification. T669 is modified (phosphothreonine). S814 carries the post-translational modification Phosphoserine.

Belongs to the TRAFAC class myosin-kinesin ATPase superfamily. Kinesin family. Interacts with MAPRE1; this interaction is required for efficient accumulation at microtubule plus ends. Interacts with KIF2C at microtubule tips; this interaction increases the affinity of both partners for microtubule plus ends and is required for robust microtubule depolymerization. KIF2C phosphorylation by AURKA or AURKB strongly reduces KIF18B-binding.

It localises to the nucleus. The protein localises to the cytoplasm. The protein resides in the cytoskeleton. In terms of biological role, in complex with KIF2C, constitutes the major microtubule plus-end depolymerizing activity in mitotic cells. Its major role may be to transport KIF2C and/or MAPRE1 along microtubules. This Mus musculus (Mouse) protein is Kinesin-like protein KIF18B (Kif18b).